Here is a 211-residue protein sequence, read N- to C-terminus: Glycerol-3-phosphate acyltransferase (211 aa).

5 consecutive transmembrane segments (helical) span residues Val5–Leu25, Gly55–Ala75, Pro85–Ala105, Val126–Leu146, and Trp168–Ile188.

Belongs to the PlsY family. Probably interacts with PlsX.

The protein resides in the cell inner membrane. The catalysed reaction is an acyl phosphate + sn-glycerol 3-phosphate = a 1-acyl-sn-glycero-3-phosphate + phosphate. Its pathway is lipid metabolism; phospholipid metabolism. Functionally, catalyzes the transfer of an acyl group from acyl-phosphate (acyl-PO(4)) to glycerol-3-phosphate (G3P) to form lysophosphatidic acid (LPA). This enzyme utilizes acyl-phosphate as fatty acyl donor, but not acyl-CoA or acyl-ACP. This chain is Glycerol-3-phosphate acyltransferase, found in Thermosynechococcus vestitus (strain NIES-2133 / IAM M-273 / BP-1).